Here is a 120-residue protein sequence, read N- to C-terminus: Spermidine export protein MdtJ (120 aa).

Transmembrane regions (helical) follow at residues 1–21 (MFYW…TLSM), 31–51 (TGFI…SFAV), 54–74 (IALG…ITLF), and 81–101 (EALS…IVLI).

This sequence belongs to the drug/metabolite transporter (DMT) superfamily. Small multidrug resistance (SMR) (TC 2.A.7.1) family. MdtJ subfamily. Forms a complex with MdtI.

It localises to the cell inner membrane. In terms of biological role, catalyzes the excretion of spermidine. The chain is Spermidine export protein MdtJ from Enterobacter sp. (strain 638).